The chain runs to 580 residues: Zinc finger protein 271 (580 aa).

C2H2-type zinc fingers lie at residues 78–100, 104–126, 132–154, 160–182, 188–210, 216–238, 244–266, 272–294, 300–322, 328–350, 356–378, 384–406, 412–434, 440–462, 468–490, 496–518, 524–545, and 551–573; these read YNCD…QRTH, YECE…QRIH, YPCS…QRVH, YKCD…QRIH, YQCS…LRIH, YMCN…QRIH, YPCA…RRIH, YKCS…QRIH, YPCN…QRIH, YPCS…YRIH, YECD…QRIH, YPCN…QRVH, YTCN…QRVH, YHCS…HRVH, YACT…QRIH, YKCM…QRIH, and YPCA…QRVH.

This sequence belongs to the krueppel C2H2-type zinc-finger protein family. Selectively expressed in adult testis.

The protein resides in the nucleus. Functionally, may act to control gene activity during the pachytene stage of meiotic prophase. May function as a transcription activator. In Mus musculus (Mouse), this protein is Zinc finger protein 271 (Znf271).